Reading from the N-terminus, the 279-residue chain is Movement protein (279 aa).

Residues 256-266 show a composition bias toward low complexity; that stretch reads PPIAIGSPSAS. Residues 256-279 form a disordered region; it reads PPIAIGSPSASRNNSFRSQVVNGL. Residues 267-279 are compositionally biased toward polar residues; that stretch reads RNNSFRSQVVNGL.

The protein belongs to the cucumovirus movement protein family.

The protein localises to the host cell junction. It is found in the host plasmodesma. Its function is as follows. Transports viral genome to neighboring plant cells directly through plasmosdesmata, without any budding. The movement protein allows efficient cell to cell propagation, by bypassing the host cell wall barrier. Acts by forming a tubular structure at the host plasmodesmata, enlarging it enough to allow free passage of virion capsids. The protein is Movement protein of Cucumis sativus (Cucumber).